The chain runs to 260 residues: Snake venom serine protease homolog 1 (260 aa).

Residues Met1 to Ala18 form the signal peptide. The propeptide occupies Gln19–Leu24. Residues Val25–Ala251 enclose the Peptidase S1 domain. 6 disulfide bridges follow: Cys31/Cys165, Cys52/Cys68, Cys100/Cys258, Cys144/Cys212, Cys176/Cys191, and Cys202/Cys227. The N-linked (GlcNAc...) asparagine glycan is linked to Asn253.

It belongs to the peptidase S1 family. Snake venom subfamily. Expressed by the venom gland.

It localises to the secreted. Its function is as follows. Snake venom serine protease homolog that may act in the hemostasis system of the prey. The sequence is that of Snake venom serine protease homolog 1 from Bitis gabonica (Gaboon adder).